The following is an 848-amino-acid chain: Probable disease resistance protein At5g43730 (848 aa).

Residues 25 to 62 are a coiled coil; it reads SNYIHLMESNLDALQKTMEELKNGRDDLLARVSIEEDK. In terms of domain architecture, NB-ARC spans 137 to 439; that stretch reads VAQKIIPKAE…CEGYINPNRY (303 aa). 179–186 is a binding site for ATP; that stretch reads GMGGIGKT. 5 LRR repeats span residues 534–555, 558–580, 582–604, 605–627, and 629–649; these read NLST…FFLF, KLVV…ISNL, SLQY…KKLR, KLIY…ATTL, and NLQV…IMEE.

It belongs to the disease resistance NB-LRR family.

Its function is as follows. Probable disease resistance protein. This chain is Probable disease resistance protein At5g43730, found in Arabidopsis thaliana (Mouse-ear cress).